Here is a 288-residue protein sequence, read N- to C-terminus: Proteasome subunit beta (288 aa).

Residues 1-57 constitute a propeptide, removed in mature form; by autocatalysis; it reads MTVDGQVGRWPVSAIPAAYMRPGSGSFTEFLAGAEPHLLPGRAGAQPAGAAPAVPHG. Thr58 acts as the Nucleophile in catalysis.

Belongs to the peptidase T1B family. In terms of assembly, the 20S proteasome core is composed of 14 alpha and 14 beta subunits that assemble into four stacked heptameric rings, resulting in a barrel-shaped structure. The two inner rings, each composed of seven catalytic beta subunits, are sandwiched by two outer rings, each composed of seven alpha subunits. The catalytic chamber with the active sites is on the inside of the barrel. Has a gated structure, the ends of the cylinder being occluded by the N-termini of the alpha-subunits. Is capped by the proteasome-associated ATPase, ARC.

It is found in the cytoplasm. The enzyme catalyses Cleavage of peptide bonds with very broad specificity.. It participates in protein degradation; proteasomal Pup-dependent pathway. With respect to regulation, the formation of the proteasomal ATPase ARC-20S proteasome complex, likely via the docking of the C-termini of ARC into the intersubunit pockets in the alpha-rings, may trigger opening of the gate for substrate entry. Interconversion between the open-gate and close-gate conformations leads to a dynamic regulation of the 20S proteasome proteolysis activity. Its function is as follows. Component of the proteasome core, a large protease complex with broad specificity involved in protein degradation. The polypeptide is Proteasome subunit beta (Nakamurella multipartita (strain ATCC 700099 / DSM 44233 / CIP 104796 / JCM 9543 / NBRC 105858 / Y-104) (Microsphaera multipartita)).